Consider the following 199-residue polypeptide: GTP cyclohydrolase 1 (199 aa).

Zn(2+) contacts are provided by cysteine 89, histidine 92, and cysteine 161.

Belongs to the GTP cyclohydrolase I family. In terms of assembly, homomer.

The enzyme catalyses GTP + H2O = 7,8-dihydroneopterin 3'-triphosphate + formate + H(+). It participates in cofactor biosynthesis; 7,8-dihydroneopterin triphosphate biosynthesis; 7,8-dihydroneopterin triphosphate from GTP: step 1/1. This Bifidobacterium longum (strain DJO10A) protein is GTP cyclohydrolase 1.